Here is a 97-residue protein sequence, read N- to C-terminus: U-reduvitoxin-Pr11a (97 aa).

Positions 1-20 (MKTALFLVFALAFIAVEGKM) are cleaved as a signal peptide. Pacifastin domains are found at residues 22–59 (RACS…CPPR) and 62–97 (EKSC…KLCL). Disulfide bonds link Cys24–Cys42, Cys37–Cys56, and Cys40–Cys51. The tract at residues 57-59 (PPR) is pro-Pro-Arg motif necessary for proteolytic processing. Intrachain disulfides connect Cys65-Cys82, Cys77-Cys96, and Cys80-Cys91.

This sequence belongs to the protease inhibitor I19 family. As to expression, expressed by the venom gland.

It is found in the secreted. Inhibits trypsin activity and prophenoloxidase (PPO) activation, an enzyme essential for both clotting and insect innate immune responses. It does not inhibit activity of chymotrypsin and protease K, and has no effect on phenoloxidase (PO) activity. This Platymeris rhadamanthus (Red spot assassin bug) protein is U-reduvitoxin-Pr11a.